Consider the following 329-residue polypeptide: Ankyrin repeat and SOCS box protein 5 (329 aa).

ANK repeat units lie at residues 69-98, 102-131, 135-164, 167-196, 200-229, and 232-261; these read ADRS…NVNA, DHVT…NVNA, DGVT…KAQL, CLPS…DVDQ, HLGT…DVQK, and YWDT…DINA. Residues 278–329 enclose the SOCS box domain; it reads MVERILLQHEATPSSLYQLCRLCIRSYIGKPRLHLIPQLQLPTLLKNFLQYR.

This sequence belongs to the ankyrin SOCS box (ASB) family.

Its pathway is protein modification; protein ubiquitination. Functionally, may be a substrate-recognition component of a SCF-like ECS (Elongin-Cullin-SOCS-box protein) E3 ubiquitin-protein ligase complex which mediates the ubiquitination and subsequent proteasomal degradation of target proteins. May play a role in the initiation of arteriogenesis. The protein is Ankyrin repeat and SOCS box protein 5 (ASB5) of Homo sapiens (Human).